Consider the following 189-residue polypeptide: Elongation factor P (189 aa).

Lys34 is subject to N6-(3,6-diaminohexanoyl)-5-hydroxylysine.

The protein belongs to the elongation factor P family. May be beta-lysylated on the epsilon-amino group of Lys-34 by the combined action of EpmA and EpmB, and then hydroxylated on the C5 position of the same residue by EpmC (if this protein is present). Lysylation is critical for the stimulatory effect of EF-P on peptide-bond formation. The lysylation moiety may extend toward the peptidyltransferase center and stabilize the terminal 3-CCA end of the tRNA. Hydroxylation of the C5 position on Lys-34 may allow additional potential stabilizing hydrogen-bond interactions with the P-tRNA.

Its subcellular location is the cytoplasm. It participates in protein biosynthesis; polypeptide chain elongation. Functionally, involved in peptide bond synthesis. Alleviates ribosome stalling that occurs when 3 or more consecutive Pro residues or the sequence PPG is present in a protein, possibly by augmenting the peptidyl transferase activity of the ribosome. Modification of Lys-34 is required for alleviation. This is Elongation factor P from Legionella pneumophila (strain Lens).